The chain runs to 349 residues: Putative phytanoyl-CoA dioxygenase (349 aa).

2-oxoglutarate-binding positions include Lys-118 and 169 to 171 (HLD). Residues His-169 and Asp-171 each coordinate Fe cation.

Belongs to the PhyH family. It depends on Fe cation as a cofactor. The cofactor is L-ascorbate.

The enzyme catalyses phytanoyl-CoA + 2-oxoglutarate + O2 = 2-hydroxyphytanoyl-CoA + succinate + CO2. Its pathway is lipid metabolism; fatty acid metabolism. Converts phytanoyl-CoA to 2-hydroxyphytanoyl-CoA. The protein is Putative phytanoyl-CoA dioxygenase of Dictyostelium discoideum (Social amoeba).